A 441-amino-acid chain; its full sequence is Membrane protein PB1A10.07c (441 aa).

11 consecutive transmembrane segments (helical) span residues 1–21, 41–61, 97–117, 128–148, 158–178, 206–226, 235–255, 263–283, 307–327, 364–384, and 415–435; these read MGAVLSIPLALASSLSGVVGI, VGAVISYAVLYFVNSLLSWCM, LSFTLVMFHLFLAFILSLCNT, GLWPFKIVLWFVLGIFSFFIP, IISVMGSALFIVYGLMLLVDF, TVGMYVVGLVLTILTYVFFCA, INTINLLLCIAVSCLSVHPTI, GLAQSSMVMCYTCYLILSALA, VIGAAFTFFTILYSAVRAASS, YNFIWFHIVFVLAAFYTASLL, and IITSWVCHGLYVWSCLAPVFF.

This sequence belongs to the TDE1 family.

It localises to the membrane. The chain is Membrane protein PB1A10.07c from Schizosaccharomyces pombe (strain 972 / ATCC 24843) (Fission yeast).